The primary structure comprises 353 residues: tRNA N(3)-cytidine methyltransferase METTL2 (353 aa).

A disordered region spans residues 1 to 37 (MAAPVVAADSPVIENMPETAGGATENSAEAQKRPQFG). Residues W93, Y97, G165, D190, D216, and I237 each contribute to the S-adenosyl-L-methionine site.

The protein belongs to the methyltransferase superfamily. METL family. Monomer.

Its subcellular location is the cytoplasm. It catalyses the reaction cytidine(32) in tRNA(Thr) + S-adenosyl-L-methionine = N(3)-methylcytidine(32) in tRNA(Thr) + S-adenosyl-L-homocysteine + H(+). It carries out the reaction cytidine(32) in tRNA(Arg)(CCU) + S-adenosyl-L-methionine = N(3)-methylcytidine(32) in tRNA(Arg)(CCU) + S-adenosyl-L-homocysteine + H(+). In terms of biological role, S-adenosyl-L-methionine-dependent methyltransferase that mediates N(3)-methylcytidine modification of residue 32 of the tRNA anticodon loop of tRNA(Thr)(UGU) and tRNA(Arg)(CCU). N(3)-methylcytidine methylation by mettl2a requires the N6-threonylcarbamoylation of tRNA (t6A37) by the EKC/KEOPS complex as prerequisite. In Danio rerio (Zebrafish), this protein is tRNA N(3)-cytidine methyltransferase METTL2 (mettl2a).